Consider the following 400-residue polypeptide: Tryptophan synthase beta chain (400 aa).

Lys92 carries the N6-(pyridoxal phosphate)lysine modification.

It belongs to the TrpB family. Tetramer of two alpha and two beta chains. The cofactor is pyridoxal 5'-phosphate.

It carries out the reaction (1S,2R)-1-C-(indol-3-yl)glycerol 3-phosphate + L-serine = D-glyceraldehyde 3-phosphate + L-tryptophan + H2O. The protein operates within amino-acid biosynthesis; L-tryptophan biosynthesis; L-tryptophan from chorismate: step 5/5. Functionally, the beta subunit is responsible for the synthesis of L-tryptophan from indole and L-serine. This is Tryptophan synthase beta chain from Neisseria gonorrhoeae (strain NCCP11945).